Consider the following 288-residue polypeptide: Pyridoxal kinase PdxY (288 aa).

Substrate-binding positions include S9 and 44 to 45 (TQ). The ATP site is built by D111, E148, and K181. D224 lines the substrate pocket.

The protein belongs to the pyridoxine kinase family. PdxY subfamily. As to quaternary structure, homodimer. It depends on Mg(2+) as a cofactor.

It catalyses the reaction pyridoxal + ATP = pyridoxal 5'-phosphate + ADP + H(+). The protein operates within cofactor metabolism; pyridoxal 5'-phosphate salvage; pyridoxal 5'-phosphate from pyridoxal: step 1/1. Functionally, pyridoxal kinase involved in the salvage pathway of pyridoxal 5'-phosphate (PLP). Catalyzes the phosphorylation of pyridoxal to PLP. The protein is Pyridoxal kinase PdxY of Haemophilus influenzae (strain PittEE).